Consider the following 268-residue polypeptide: Syntaxin-22 (268 aa).

A disordered region spans residues 1-23 (MSFQDLESGRGRSTRKFNGGRQD). An N-acetylserine modification is found at S2. Residues 2–246 (SFQDLESGRG…AAKTQKSNSS (245 aa)) are Cytoplasmic-facing. The t-SNARE coiled-coil homology domain occupies 175–237 (EAVIEEREQG…SQGKSQLVQA (63 aa)). A helical; Anchor for type IV membrane protein transmembrane segment spans residues 247 to 267 (LTCLLLVIFGIVLLIVIIVLA). A268 is a topological domain (vesicular).

Belongs to the syntaxin family. Interacts with VTI11 and SYP51 to form a t-SNARE complex, but not with VPS45. In terms of tissue distribution, expressed in roots, leaves, stems, flower and green siliques.

It is found in the prevacuolar compartment membrane. Its subcellular location is the vacuole membrane. In terms of biological role, may provide the t-SNARE function in the vacuolar assembly. Promotes the formation of vacuolar membrane 'bulbs'. Required for inflorescence stem gravitropism. This chain is Syntaxin-22 (SYP22), found in Arabidopsis thaliana (Mouse-ear cress).